Reading from the N-terminus, the 172-residue chain is Adrenodoxin-like protein 1, mitochondrial (172 aa).

Residues 57 to 159 enclose the 2Fe-2S ferredoxin-type domain; sequence VNITYVDKDG…GMELELPKAT (103 aa). Positions 94, 100, 103, and 140 each coordinate [2Fe-2S] cluster.

The protein belongs to the adrenodoxin/putidaredoxin family. It depends on [2Fe-2S] cluster as a cofactor.

The protein resides in the mitochondrion matrix. Functionally, required for ecdysteroidogenesis in the prothoracic gland which is necessary for larval to pupal transition. This Drosophila melanogaster (Fruit fly) protein is Adrenodoxin-like protein 1, mitochondrial.